The following is a 162-amino-acid chain: Crossover junction endodeoxyribonuclease RuvC (162 aa).

Catalysis depends on residues aspartate 8, glutamate 69, and histidine 141. Positions 8, 69, and 141 each coordinate Mg(2+).

Belongs to the RuvC family. In terms of assembly, homodimer which binds Holliday junction (HJ) DNA. The HJ becomes 2-fold symmetrical on binding to RuvC with unstacked arms; it has a different conformation from HJ DNA in complex with RuvA. In the full resolvosome a probable DNA-RuvA(4)-RuvB(12)-RuvC(2) complex forms which resolves the HJ. Requires Mg(2+) as cofactor.

The protein localises to the cytoplasm. It carries out the reaction Endonucleolytic cleavage at a junction such as a reciprocal single-stranded crossover between two homologous DNA duplexes (Holliday junction).. The RuvA-RuvB-RuvC complex processes Holliday junction (HJ) DNA during genetic recombination and DNA repair. Endonuclease that resolves HJ intermediates. Cleaves cruciform DNA by making single-stranded nicks across the HJ at symmetrical positions within the homologous arms, yielding a 5'-phosphate and a 3'-hydroxyl group; requires a central core of homology in the junction. The consensus cleavage sequence is 5'-(A/T)TT(C/G)-3'. Cleavage occurs on the 3'-side of the TT dinucleotide at the point of strand exchange. HJ branch migration catalyzed by RuvA-RuvB allows RuvC to scan DNA until it finds its consensus sequence, where it cleaves and resolves the cruciform DNA. This Wolbachia sp. subsp. Drosophila simulans (strain wRi) protein is Crossover junction endodeoxyribonuclease RuvC.